The chain runs to 253 residues: DNA repair protein RecO (253 aa).

It belongs to the RecO family.

In terms of biological role, involved in DNA repair and RecF pathway recombination. The polypeptide is DNA repair protein RecO (Pediococcus pentosaceus (strain ATCC 25745 / CCUG 21536 / LMG 10740 / 183-1w)).